The primary structure comprises 216 residues: MLIAKLLLVVIVSYILGSIPFGYLVSHRGSKIDIRSFGSGRTGATNVLRTMGRKAALLVASLDVIKGASAVAFAGLVIGTEALAFGTNGMALLFAQVLAGLAAVAGHIWPVFLKFRGGRGVATFFGGMIALCPVAAIFGGEVLIIGAGLSGFASLGSITGVVGAYALLVPLTLISGFPTEYMIYAVIGSLLITIMHRDNIKRLLAGKERKLNEKAR.

5 helical membrane passes run 6–26 (LLLV…YLVS), 58–78 (LVAS…GLVI), 92–112 (LLFA…WPVF), 125–145 (FGGM…VLII), and 158–178 (ITGV…SGFP).

Belongs to the PlsY family. As to quaternary structure, probably interacts with PlsX.

Its subcellular location is the cell membrane. It carries out the reaction an acyl phosphate + sn-glycerol 3-phosphate = a 1-acyl-sn-glycero-3-phosphate + phosphate. It participates in lipid metabolism; phospholipid metabolism. Functionally, catalyzes the transfer of an acyl group from acyl-phosphate (acyl-PO(4)) to glycerol-3-phosphate (G3P) to form lysophosphatidic acid (LPA). This enzyme utilizes acyl-phosphate as fatty acyl donor, but not acyl-CoA or acyl-ACP. The polypeptide is Glycerol-3-phosphate acyltransferase 3 (Dehalococcoides mccartyi (strain CBDB1)).